The primary structure comprises 198 residues: Recombination protein RecR (198 aa).

The C4-type zinc-finger motif lies at 57 to 72 (CSICGRLTDDDPCSIC). The region spanning 80–175 (TTILVLEDSR…KVTRLARGLA (96 aa)) is the Toprim domain.

The protein belongs to the RecR family.

In terms of biological role, may play a role in DNA repair. It seems to be involved in an RecBC-independent recombinational process of DNA repair. It may act with RecF and RecO. This is Recombination protein RecR from Streptococcus pneumoniae (strain 70585).